A 415-amino-acid chain; its full sequence is WD repeat and FYVE domain-containing protein 2 (415 aa).

WD repeat units follow at residues 71–103 (HHFM…YEFS), 119–148 (CHAG…IVWH), 202–232 (AHTN…IMWD), and 245–284 (GHNG…VETP). The FYVE-type zinc finger occupies 286–357 (WKTSDCCQKC…ICNDCNARMK (72 aa)). Cys-292, Cys-295, Cys-319, Cys-322, Cys-327, Cys-330, Cys-349, and Cys-352 together coordinate Zn(2+). One copy of the WD 5 repeat lies at 373-403 (EIHTGITAMHLQETLGLLVTSGQNRVIMIWD).

Functionally, plays a role in coelomocyte endocytosis. The protein is WD repeat and FYVE domain-containing protein 2 (wdfy-2) of Caenorhabditis elegans.